The sequence spans 122 residues: Large ribosomal subunit protein bL17 (122 aa).

It belongs to the bacterial ribosomal protein bL17 family. In terms of assembly, part of the 50S ribosomal subunit. Contacts protein L32.

The sequence is that of Large ribosomal subunit protein bL17 from Nautilia profundicola (strain ATCC BAA-1463 / DSM 18972 / AmH).